Reading from the N-terminus, the 385-residue chain is Probable caffeine synthase 4 (385 aa).

Positions 18, 62, 67, 101, 102, 140, and 141 each coordinate S-adenosyl-L-homocysteine. Caffeine-binding residues include Y158, Q161, and F162. Mg(2+) is bound at residue N179. A caffeine-binding site is contributed by T238. The Mg(2+) site is built by D261, F263, and N264. Y369 contacts caffeine.

The protein belongs to the methyltransferase superfamily. Type-7 methyltransferase family. The cofactor is Mg(2+). As to expression, expressed in roots, stems, young and old leaves.

It functions in the pathway alkaloid biosynthesis. May be involved in the biosynthesis of caffeine. The protein is Probable caffeine synthase 4 of Coffea arabica (Arabian coffee).